Consider the following 462-residue polypeptide: Fumarate hydratase class II (462 aa).

Substrate is bound by residues 97-99, 127-130, 137-139, and T185; these read SGT, HPND, and SSN. Catalysis depends on H186, which acts as the Proton donor/acceptor. S316 is an active-site residue. Substrate contacts are provided by residues S317 and 322 to 324; that span reads KVN.

Belongs to the class-II fumarase/aspartase family. Fumarase subfamily. Homotetramer.

Its subcellular location is the cytoplasm. The enzyme catalyses (S)-malate = fumarate + H2O. It participates in carbohydrate metabolism; tricarboxylic acid cycle; (S)-malate from fumarate: step 1/1. Its function is as follows. Involved in the TCA cycle. Catalyzes the stereospecific interconversion of fumarate to L-malate. This chain is Fumarate hydratase class II, found in Bacillus cereus (strain ATCC 14579 / DSM 31 / CCUG 7414 / JCM 2152 / NBRC 15305 / NCIMB 9373 / NCTC 2599 / NRRL B-3711).